Consider the following 511-residue polypeptide: MFATQSPRHLQVLLCRTKKFALASPPICYKVGAASSGSIRKFLSARFSTSARARNLKQSVLDNSGRHGVYLYPTLKPEPLNVVSAKDTTVVFSNGKTIEDTTCGAAVACLGYNNERVKNAMIKQMDSFCYSNSLFYGHEIGEELAAELIGGTNGEMAKVYLMCSGAEAMESAMKMARQYYMELNPRQPQRTNFIAREGSYHGSTLGALSMGGHVGRRKLFEGMLLDNNIHRVSAANEYRGKADGQTTEEYVQQLADELDRKFQEVGPETVAAFVAETLVGATLGTIPAPTGYFKAMKKVCDKYGALLILDEVMCGMGRCGSLHEWEQEGVVPDIQTVAKGLAGGFAPMAAMFINHRLSDALMSGSGVFSHGHTYQGHPVGCAAALEVQRIIREDNLVENVRKNGEYLGKLLHDQLDDHPNVGNIRGRGFFWSMEFVADKETKEPFLPSDGIAKKVHLTALNDVGISLYPGMGTKDGVAGDHAWIGPAYNCSKQDIERIVSKVKEAVVLALG.

A pyridoxal 5'-phosphate-binding site is contributed by 165 to 166 (GA). Y200 contacts substrate. D310 is a binding site for pyridoxal 5'-phosphate. N6-(pyridoxal phosphate)lysine is present on K339. G371 lines the substrate pocket. Residue 372 to 373 (HT) coordinates pyridoxal 5'-phosphate.

Belongs to the class-III pyridoxal-phosphate-dependent aminotransferase family. Requires pyridoxal 5'-phosphate as cofactor.

It functions in the pathway secondary metabolite biosynthesis. In terms of biological role, aminotransferase; part of the gene cluster that mediates the biosynthesis of the lipopeptide fusaristatin A. Fusaristatin A consists of a polyketide chain linked to three amino acid residues glutamine (Gln), dehydroalanine (dehydro-Ala), and beta-aminoisobutyric acid. The biosynthesis starts with formation of a linear polyketide chain by the highly reducing polyketide synthase PKS6. The gene cluster does not contain an acyl-CoA ligase or an acyl-transferase, and it is therefore predicted that the polyketide is transferred directly to the nonribosomal peptide synthetase NRPS7. Modules 1-3 from NRPS7 incorporate dehydro-Ala, Gln, and beta-aminoisobutyric acid in the compound, which is released by cyclization. The beta-aminoisobutyric acid units are most likely not freely available to the NRPS, but can be synthesized from thymine, which requires a dehydrogenase, a monooxygenase, and an aminotransferase. The fusaristatin A cluster contains a cytochrome P450 monooxygenase (FGSG_08207) and an aminotransferase (FGSG_17085), which theoretically can perform two of the enzymatic steps. The enzymes may however also be involved in biosynthesis of dehydroalanine or modification of the polyketide. The dehydro-Ala residue can be a result of cyclization, where serine is dehydrated. The last gene of the cluster encodes a protein with an A/B barrel domain found in variable enzymes, which hampers functional prediction. The polypeptide is Aminotransferase FGSG_17085 (Gibberella zeae (strain ATCC MYA-4620 / CBS 123657 / FGSC 9075 / NRRL 31084 / PH-1) (Wheat head blight fungus)).